The chain runs to 2774 residues: Teneurin-2 (2774 aa).

Residues 1-375 (MDVKDRRHRS…KPSKYCSWKC (375 aa)) form the Teneurin N-terminal domain. The Cytoplasmic portion of the chain corresponds to 1–379 (MDVKDRRHRS…YCSWKCAALS (379 aa)). Residues S90 and S124 each carry the phosphoserine modification. Positions 111 to 271 (TGSDADSDTE…HHHSSANSLN (161 aa)) are disordered. Residues 141-155 (SSGLSSRENSALTLT) are compositionally biased toward polar residues. A Phosphothreonine modification is found at T155. S157 is modified (phosphoserine). Positions 159–168 (NENKSDDDNG) are enriched in basic and acidic residues. The span at 174–188 (TSSSSLLPSAQLPSS) shows a compositional bias: low complexity. Polar residues predominate over residues 202–211 (DSNTSHQIMD). The span at 229 to 240 (SGPQQASSSGPP) shows a compositional bias: low complexity. Residues 380-400 (AIAAALLLAILLAYFIAMHLL) traverse the membrane as a helical segment. The Extracellular segment spans residues 401–2774 (GLNWQLQPAD…FLRQNEMGKR (2374 aa)). N-linked (GlcNAc...) asparagine glycosylation is found at N443 and N482. EGF-like domains lie at 575-603 (DCPR…ADCA), 605-634 (AACP…AECD), 636-668 (PMNQ…EHCE), 669-701 (EVDC…NCEL), 702-735 (ARVQ…PDCS), 738-766 (VCSV…AACD), 769-797 (VCHP…EHCT), and 808-841 (DGCP…PGCN). Cystine bridges form between C576/C586, C580/C591, C593/C602, C611/C622, C624/C633, C640/C651, C645/C656, C658/C667, C672/C683, C677/C688, C690/C699, C710/C723, C725/C734, C739/C749, C743/C754, C756/C765, C770/C780, C774/C785, C787/C796, C810/C820, C814/C829, and C831/C840. N-linked (GlcNAc...) asparagine glycosylation is found at N925, N948, and N1267. NHL repeat units follow at residues 1272 to 1316 (LELR…VKSL), 1342 to 1386 (ARCG…NGII), 1401 to 1452 (LSCD…IAGR), 1474 to 1501 (LESA…INRL), and 1530 to 1573 (CYSG…VSKN). The YD 1 repeat unit spans residues 1583 to 1602 (YEAASPGEQELYVFNADGIH). The N-linked (GlcNAc...) asparagine glycan is linked to N1616. 3 YD repeats span residues 1619-1639 (YSAD…LKIR), 1682-1701 (YDGN…WTTF), and 1702-1724 (YDYD…TSLH). 5 N-linked (GlcNAc...) asparagine glycosylation sites follow: N1712, N1749, N1773, N1807, and N1892. YD repeat units follow at residues 1895–1914 (YFFN…ERTD), 1936–1954 (YLDK…YIFE), 1955–1975 (YDSS…HSMS), 1982–1999 (YIRN…VIFD), 2000–2021 (YSDD…VFYK), 2022–2039 (YGKL…TAVT), 2042–2062 (YDET…FSCT), 2065–2085 (YRKV…EGMI), 2093–2113 (YHDN…TPLP), 2119–2136 (YDEI…GVIY), 2137–2163 (YDIN…IKEV), 2165–2178 (YEMF…MTVQ), 2179–2202 (YDSM…TKYT), 2205–2225 (YDGD…WRYS), 2226–2246 (YDLN…LMPL), 2248–2268 (YDLR…DDDG), 2280–2300 (YNSK…SVQY), and 2302–2322 (YDGV…LQYF). The N-linked (GlcNAc...) asparagine glycan is linked to N1993. N-linked (GlcNAc...) asparagine glycosylation occurs at N2197. N-linked (GlcNAc...) asparagine glycosylation occurs at N2337. The stretch at 2348 to 2389 (YDLQGHLFAMESSSGEEYYVASDNTGTPLAVFSINGLMIKQL) is one YD 23 repeat. Residue N2648 is glycosylated (N-linked (GlcNAc...) asparagine).

The protein belongs to the tenascin family. Teneurin subfamily. Homodimer; disulfide-linked. Heterodimer with either TENM1 or TENM3. May also form heterodimer with TENM4. Interacts with ADGRL1 isoform 2. In terms of processing, derives from the membrane form by proteolytic processing. Derives from the plasma membrane form by proteolytic cleavage and translocates to the nucleus. Homophilic binding of the C-terminal extracellular domain stimulates its proteolytic cleavage and release in the cytoplasmic. Is subjected to rapid degradation by the proteasome pathway. In terms of tissue distribution, expressed in the brain (at protein level).

The protein resides in the cell membrane. It localises to the presynaptic cell membrane. The protein localises to the postsynaptic cell membrane. It is found in the endoplasmic reticulum. Its subcellular location is the golgi apparatus. The protein resides in the synapse. It localises to the cell projection. The protein localises to the dendritic spine. It is found in the filopodium. Its subcellular location is the growth cone. The protein resides in the nucleus. It localises to the PML body. Functionally, involved in neural development, regulating the establishment of proper connectivity within the nervous system. Acts as a ligand of the ADGRL1 and ADGRL3 receptors that are expressed at the surface of adjacent cells. Promotes the formation of filopodia and enlarged growth cone in neuronal cells. Mediates axon guidance and homophilic and heterophilic cell-cell adhesion. May function as a cellular signal transducer. Its function is as follows. Induces gene transcription inhibition. The sequence is that of Teneurin-2 (Tenm2) from Rattus norvegicus (Rat).